Here is an 86-residue protein sequence, read N- to C-terminus: Large ribosomal subunit protein bL31B (86 aa).

Belongs to the bacterial ribosomal protein bL31 family. Type B subfamily. In terms of assembly, part of the 50S ribosomal subunit.

This is Large ribosomal subunit protein bL31B from Cupriavidus taiwanensis (strain DSM 17343 / BCRC 17206 / CCUG 44338 / CIP 107171 / LMG 19424 / R1) (Ralstonia taiwanensis (strain LMG 19424)).